The primary structure comprises 288 residues: Protein sprouty homolog 3 (288 aa).

The SPR domain maps to 154-260 (KCVPCTAARP…GYDSLRRPGC (107 aa)).

It belongs to the sprouty family. Interacts with TESK1. Interacts with USP11. Interacts with CAV1 (via C-terminus). In terms of tissue distribution, widely expressed; particularly in the fetal tissues. Expressed in the brain with expression the highest in Purkinje cells in the cerebellum (at protein level). Expressed in the myocardium of the heart.

It localises to the cytoplasm. Its function is as follows. Inhibits neurite branching, arbor length and neurite complexity. Inhibits EGF-mediated p42/44 ERK signaling. Negatively regulates the MAPK cascade, resulting in a reduction of extracellular matrix protein accumulation. May function as an antagonist of fibroblast growth factor (FGF) pathways and may negatively modulate respiratory organogenesis. In Homo sapiens (Human), this protein is Protein sprouty homolog 3.